Consider the following 1004-residue polypeptide: Polyhomeotic-like protein 1 (1004 aa).

Residues methionine 1–serine 22 are compositionally biased toward low complexity. Disordered stretches follow at residues methionine 1–proline 24, asparagine 212–serine 241, serine 261–arginine 355, glutamine 432–alanine 512, arginine 556–leucine 589, and threonine 636–valine 672. Over residues asparagine 212–lysine 228 the composition is skewed to polar residues. Gly residues predominate over residues methionine 279–serine 303. Polar residues-rich tracts occupy residues glutamine 319–threonine 329 and serine 344–arginine 355. Residues glutamine 432–alanine 447 show a composition bias toward low complexity. The segment covering proline 448 to glutamine 458 has biased composition (pro residues). Low complexity predominate over residues valine 459–leucine 482. Pro residues predominate over residues serine 483 to proline 495. The segment covering glutamine 566 to glutamine 583 has biased composition (low complexity). Serine 645 is modified (phosphoserine). A Glycyl lysine isopeptide (Lys-Gly) (interchain with G-Cter in SUMO2) cross-link involves residue lysine 763. The segment at leucine 791–lysine 825 adopts an FCS-type zinc-finger fold. The Zn(2+) site is built by cysteine 800, cysteine 803, cysteine 819, and cysteine 823. The tract at residues alanine 848–isoleucine 928 is disordered. Serine 898 carries the post-translational modification Phosphoserine. Threonine 922 carries the phosphothreonine modification. In terms of domain architecture, SAM spans tryptophan 940–threonine 1004.

In terms of assembly, homodimer. Component of a PRC1-like complex. Interacts with RNF2 and CBX7. Interacts with PHC2, PHC2 and BMI1.

It localises to the nucleus. In terms of biological role, component of a Polycomb group (PcG) multiprotein PRC1-like complex, a complex class required to maintain the transcriptionally repressive state of many genes, including Hox genes, throughout development. PcG PRC1 complex acts via chromatin remodeling and modification of histones; it mediates monoubiquitination of histone H2A 'Lys-119', rendering chromatin heritably changed in its expressibility. Required for proper control of cellular levels of GMNN expression. The sequence is that of Polyhomeotic-like protein 1 (PHC1) from Homo sapiens (Human).